A 123-amino-acid chain; its full sequence is Small ribosomal subunit protein uS12 (123 aa).

The interval 1-23 (MPTISQLVKKGREKVEKKTKSPA) is disordered. At Asp89 the chain carries 3-methylthioaspartic acid.

It belongs to the universal ribosomal protein uS12 family. Part of the 30S ribosomal subunit. Contacts proteins S8 and S17. May interact with IF1 in the 30S initiation complex.

With S4 and S5 plays an important role in translational accuracy. In terms of biological role, interacts with and stabilizes bases of the 16S rRNA that are involved in tRNA selection in the A site and with the mRNA backbone. Located at the interface of the 30S and 50S subunits, it traverses the body of the 30S subunit contacting proteins on the other side and probably holding the rRNA structure together. The combined cluster of proteins S8, S12 and S17 appears to hold together the shoulder and platform of the 30S subunit. The sequence is that of Small ribosomal subunit protein uS12 from Thermodesulfovibrio yellowstonii (strain ATCC 51303 / DSM 11347 / YP87).